The primary structure comprises 289 residues: 4-diphosphocytidyl-2-C-methyl-D-erythritol kinase (289 aa).

K10 is a catalytic residue. Position 94–104 (94–104 (PVAAGLAGGSS)) interacts with ATP. The active site involves D136.

This sequence belongs to the GHMP kinase family. IspE subfamily.

It catalyses the reaction 4-CDP-2-C-methyl-D-erythritol + ATP = 4-CDP-2-C-methyl-D-erythritol 2-phosphate + ADP + H(+). The protein operates within isoprenoid biosynthesis; isopentenyl diphosphate biosynthesis via DXP pathway; isopentenyl diphosphate from 1-deoxy-D-xylulose 5-phosphate: step 3/6. In terms of biological role, catalyzes the phosphorylation of the position 2 hydroxy group of 4-diphosphocytidyl-2C-methyl-D-erythritol. The polypeptide is 4-diphosphocytidyl-2-C-methyl-D-erythritol kinase (Bacillus anthracis).